The chain runs to 199 residues: Recombination protein RecR (199 aa).

The C4-type zinc finger occupies 56 to 71 (CRSCFNVAQSELCRIC). Positions 79–174 (ALICVVEEPK…RVTRLASGLP (96 aa)) constitute a Toprim domain.

The protein belongs to the RecR family.

May play a role in DNA repair. It seems to be involved in an RecBC-independent recombinational process of DNA repair. It may act with RecF and RecO. This chain is Recombination protein RecR, found in Frankia alni (strain DSM 45986 / CECT 9034 / ACN14a).